Here is a 181-residue protein sequence, read N- to C-terminus: Ribosome maturation factor RimP (181 aa).

It belongs to the RimP family.

It localises to the cytoplasm. Functionally, required for maturation of 30S ribosomal subunits. This chain is Ribosome maturation factor RimP, found in Sphingopyxis alaskensis (strain DSM 13593 / LMG 18877 / RB2256) (Sphingomonas alaskensis).